Consider the following 593-residue polypeptide: A-type ATP synthase subunit A (593 aa).

236–243 lines the ATP pocket; the sequence is GPFGSGKT.

The protein belongs to the ATPase alpha/beta chains family. In terms of assembly, has multiple subunits with at least A(3), B(3), C, D, E, F, H, I and proteolipid K(x).

The protein resides in the cell membrane. It catalyses the reaction ATP + H2O + 4 H(+)(in) = ADP + phosphate + 5 H(+)(out). Component of the A-type ATP synthase that produces ATP from ADP in the presence of a proton gradient across the membrane. The A chain is the catalytic subunit. The sequence is that of A-type ATP synthase subunit A from Pyrobaculum arsenaticum (strain DSM 13514 / JCM 11321 / PZ6).